A 536-amino-acid polypeptide reads, in one-letter code: SNW domain-containing protein 1 (536 aa).

Residues 1–46 form a disordered region; that stretch reads MALTSFLPAPTQLSQDQLEAEEKARSQRSRQTSLVSSRREPPPYGY. At alanine 2 the chain carries N-acetylalanine. The residue at position 14 (serine 14) is a Phosphoserine. Lysine 23 participates in a covalent cross-link: Glycyl lysine isopeptide (Lys-Gly) (interchain with G-Cter in SUMO2). The segment at 59–79 is interaction with PPIL1; the sequence is GDGGAFPEIHVAQYPLDMGRK. Residues lysine 81, lysine 97, lysine 115, lysine 122, lysine 141, lysine 158, and lysine 170 each participate in a glycyl lysine isopeptide (Lys-Gly) (interchain with G-Cter in SUMO2) cross-link. The SNW stretch occupies residues 174 to 339; the sequence is AQYIRYTPSQ…KARERRAGIK (166 aa). A phosphoserine mark is found at serine 182 and serine 190. Lysine 193 is covalently cross-linked (Glycyl lysine isopeptide (Lys-Gly) (interchain with G-Cter in SUMO2)). The interval 209–233 is disordered; that stretch reads PPRFKINKKIPRGPPSPPAPVMHSP. Phosphoserine occurs at positions 224, 232, and 234. Residues lysine 240, lysine 258, lysine 286, lysine 339, lysine 344, lysine 416, and lysine 441 each participate in a glycyl lysine isopeptide (Lys-Gly) (interchain with G-Cter in SUMO2) cross-link. The tract at residues 311 to 386 is disordered; sequence KMAQKEKEKH…RSKLQRNENR (76 aa). The residue at position 446 (serine 446) is a Phosphoserine. Lysine 452 participates in a covalent cross-link: Glycyl lysine isopeptide (Lys-Gly) (interchain with G-Cter in SUMO2). Composition is skewed to basic and acidic residues over residues 470 to 489 and 503 to 530; these read NRFVPDKEFSGSDRRQRGRE and KFLEEAKQHGGSKRPSDSSRPKEHEHEG. The disordered stretch occupies residues 470 to 536; the sequence is NRFVPDKEFS…EHEGKKRRKE (67 aa). Phosphoserine is present on residues serine 479 and serine 481. Residue lysine 509 forms a Glycyl lysine isopeptide (Lys-Gly) (interchain with G-Cter in SUMO2) linkage.

It belongs to the SNW family. In terms of assembly, identified in the spliceosome C complex. Associates with U4/U6-U5 tri-small nuclear ribonucleoproteins (U4/U6-U5 tri-snRNPs). Component of the minor spliceosome, which splices U12-type introns. Interacts with SKI, SMAD2,SMAD3, RBPJ, RB1, PABPN1, MAGEA1, SIRT1, FOXN3, U2AF2, DAXX and ATP1B4. Interacts with PPIL1. Interacts with VDR and RXRA; preferentially associates with VDR:RXRA heterodimers. Interacts with NCOR2. Interacts with MAML1. Interacts with NOTCH1 NICD; the interaction involves multimerized NOTCH1 NICD. Forms a complex with NOTCH1 NICD and MAML1; the association is dissociated by RBPJ. Associates with positive transcription elongation factor b (P-TEFb). Component of the SNARP complex which consists at least of SNIP1, SNW1, THRAP3, BCLAF1 and PNN. (Microbial infection) Interacts with human papillomavirus type-16 (HPV16) E7 protein. As to quaternary structure, (Microbial infection) Interacts with EBV EBNA2; EBNA2 competes with NCOR2 for interaction with SNW1.

It is found in the nucleus. Functionally, involved in pre-mRNA splicing as component of the spliceosome. As a component of the minor spliceosome, involved in the splicing of U12-type introns in pre-mRNAs. Required for the specific splicing of CDKN1A pre-mRNA; the function probably involves the recruitment of U2AF2 to the mRNA. May recruit PPIL1 to the spliceosome. May be involved in cyclin-D1/CCND1 mRNA stability through the SNARP complex which associates with both the 3'end of the CCND1 gene and its mRNA. Involved in transcriptional regulation. Modulates TGF-beta-mediated transcription via association with SMAD proteins, MYOD1-mediated transcription via association with PABPN1, RB1-mediated transcriptional repression, and retinoid-X receptor (RXR)- and vitamin D receptor (VDR)-dependent gene transcription in a cell line-specific manner probably involving coactivators NCOA1 and GRIP1. Is involved in NOTCH1-mediated transcriptional activation. Binds to multimerized forms of Notch intracellular domain (NICD) and is proposed to recruit transcriptional coactivators such as MAML1 to form an intermediate preactivation complex which associates with DNA-bound CBF-1/RBPJ to form a transcriptional activation complex by releasing SNW1 and redundant NOTCH1 NICD. (Microbial infection) Is recruited by HIV-1 Tat to Tat:P-TEFb:TAR RNA complexes and is involved in Tat transcription by recruitment of MYC, MEN1 and TRRAP to the HIV promoter. In terms of biological role, (Microbial infection) Proposed to be involved in transcriptional activation by EBV EBNA2 of CBF-1/RBPJ-repressed promoters. The chain is SNW domain-containing protein 1 (SNW1) from Homo sapiens (Human).